A 458-amino-acid polypeptide reads, in one-letter code: ATP synthase subunit beta (458 aa).

Position 148 to 155 (148 to 155 (GGAGVGKT)) interacts with ATP.

Belongs to the ATPase alpha/beta chains family. F-type ATPases have 2 components, CF(1) - the catalytic core - and CF(0) - the membrane proton channel. CF(1) has five subunits: alpha(3), beta(3), gamma(1), delta(1), epsilon(1). CF(0) has three main subunits: a(1), b(2) and c(9-12). The alpha and beta chains form an alternating ring which encloses part of the gamma chain. CF(1) is attached to CF(0) by a central stalk formed by the gamma and epsilon chains, while a peripheral stalk is formed by the delta and b chains.

The protein resides in the cell inner membrane. The catalysed reaction is ATP + H2O + 4 H(+)(in) = ADP + phosphate + 5 H(+)(out). Produces ATP from ADP in the presence of a proton gradient across the membrane. The catalytic sites are hosted primarily by the beta subunits. This is ATP synthase subunit beta from Shewanella woodyi (strain ATCC 51908 / MS32).